The following is a 120-amino-acid chain: MMICKVLVITVFCVLTVAFPSLDIDSINEELQDSIFDILNSTSDFQLASYEPSTSPPEDSTYQESNTDFMQTTYSKSIQISELSNGAETVSSSFLEEVTETSESTVEFPLAETTTFSSTS.

The first 18 residues, 1 to 18 (MMICKVLVITVFCVLTVA), serve as a signal peptide directing secretion.

It is found in the secreted. This chain is Kidney androgen-regulated protein (Kap), found in Rattus norvegicus (Rat).